The following is a 285-amino-acid chain: Energy-coupling factor transporter ATP-binding protein EcfA2 (285 aa).

One can recognise an ABC transporter domain in the interval 3-245; that stretch reads IKFKKVDYIY…RKWLKKHNLS (243 aa). 40–47 serves as a coordination point for ATP; it reads GHTGSGKS.

Belongs to the ABC transporter superfamily. Energy-coupling factor EcfA family. Forms a stable energy-coupling factor (ECF) transporter complex composed of 2 membrane-embedded substrate-binding proteins (S component), 2 ATP-binding proteins (A component) and 2 transmembrane proteins (T component).

The protein localises to the cell membrane. Its function is as follows. ATP-binding (A) component of a common energy-coupling factor (ECF) ABC-transporter complex. Unlike classic ABC transporters this ECF transporter provides the energy necessary to transport a number of different substrates. This Lactobacillus acidophilus (strain ATCC 700396 / NCK56 / N2 / NCFM) protein is Energy-coupling factor transporter ATP-binding protein EcfA2.